We begin with the raw amino-acid sequence, 481 residues long: Heat stress transcription factor A-1b (481 aa).

The segment covering 1–16 (MESVPESVPSPNSNTP) has biased composition (low complexity). Residues 1–23 (MESVPESVPSPNSNTPSIPPPVN) form a disordered region. Residues 25–119 (VPPFLSKTYD…LLKSIVRRKP (95 aa)) mediate DNA binding. The interval 138–204 (ACVEVGKFGI…QMMSFLAKAV (67 aa)) is hydrophobic repeat HR-A/B. Residues 213-227 (LVQQNNNDGNRQIPG) are compositionally biased toward polar residues. Positions 213 to 244 (LVQQNNNDGNRQIPGSNKKRRLPVDEQENRGD) are disordered. The short motif at 229–233 (NKKRR) is the Nuclear localization signal element. A compositionally biased stretch (basic and acidic residues) spans 234–243 (LPVDEQENRG). The AHA signature appears at 418–427 (DPFWEQFFSV). The Nuclear export signal signature appears at 467–474 (LTEQMGLL).

This sequence belongs to the HSF family. Class A subfamily. As to quaternary structure, homotrimer. Binds to HSBP. Exhibits temperature-dependent phosphorylation.

It localises to the cytoplasm. It is found in the nucleus. Transcriptional activator that specifically binds DNA sequence 5'-AGAAnnTTCT-3' known as heat shock promoter elements (HSE). The sequence is that of Heat stress transcription factor A-1b (HSFA1B) from Arabidopsis thaliana (Mouse-ear cress).